The primary structure comprises 461 residues: D-phenylhydantoinase (461 aa).

Residues H59, H61, and K151 each coordinate a divalent metal cation. K151 bears the N6-carboxylysine mark. Position 156 (Y156) interacts with substrate. H182 and H239 together coordinate a divalent metal cation. S286 lines the substrate pocket. D313 is an a divalent metal cation binding site. N335 lines the substrate pocket.

This sequence belongs to the metallo-dependent hydrolases superfamily. Hydantoinase/dihydropyrimidinase family. As to quaternary structure, homotetramer. The cofactor is a divalent metal cation. Post-translationally, carboxylation allows a single lysine to coordinate two divalent metal cations.

The catalysed reaction is D-5-phenylhydantoin + H2O = N-carbamoyl-D-phenylglycine + H(+). In terms of biological role, catalyzes the stereospecific hydrolysis of the cyclic amide bond of D-hydantoin derivatives with an aromatic side chains at the 5'-position. Has no activity on dihydropyrimidines. The physiological function is unknown. The chain is D-phenylhydantoinase from Escherichia coli O17:K52:H18 (strain UMN026 / ExPEC).